A 378-amino-acid chain; its full sequence is Glutamate 5-kinase (378 aa).

Lysine 15 provides a ligand contact to ATP. Substrate is bound by residues serine 56, aspartate 143, and asparagine 155. 175–176 contributes to the ATP binding site; the sequence is SD. The region spanning 281-358 is the PUA domain; sequence KGTLTIDAGA…PDVAVILGIS (78 aa).

This sequence belongs to the glutamate 5-kinase family.

It localises to the cytoplasm. It carries out the reaction L-glutamate + ATP = L-glutamyl 5-phosphate + ADP. It participates in amino-acid biosynthesis; L-proline biosynthesis; L-glutamate 5-semialdehyde from L-glutamate: step 1/2. In terms of biological role, catalyzes the transfer of a phosphate group to glutamate to form L-glutamate 5-phosphate. This Bradyrhizobium sp. (strain BTAi1 / ATCC BAA-1182) protein is Glutamate 5-kinase.